The primary structure comprises 715 residues: Fatty acid oxidation complex subunit alpha (715 aa).

The tract at residues 1 to 190 (MIYQGKAITV…KVGAVDAVVA (190 aa)) is enoyl-CoA hydratase/isomerase. Aspartate 297 is a substrate binding site. A 3-hydroxyacyl-CoA dehydrogenase region spans residues 312–715 (KDVKLAAVLG…MAKNGQKFFG (404 aa)). NAD(+)-binding positions include methionine 325, aspartate 344, 401-403 (VVE), lysine 408, and serine 430. Histidine 451 functions as the For 3-hydroxyacyl-CoA dehydrogenase activity in the catalytic mechanism. Asparagine 454 is a binding site for NAD(+). Residues asparagine 501 and tyrosine 660 each contribute to the substrate site.

It in the N-terminal section; belongs to the enoyl-CoA hydratase/isomerase family. This sequence in the C-terminal section; belongs to the 3-hydroxyacyl-CoA dehydrogenase family. As to quaternary structure, heterotetramer of two alpha chains (FadB) and two beta chains (FadA).

The catalysed reaction is a (3S)-3-hydroxyacyl-CoA + NAD(+) = a 3-oxoacyl-CoA + NADH + H(+). The enzyme catalyses a (3S)-3-hydroxyacyl-CoA = a (2E)-enoyl-CoA + H2O. It carries out the reaction a 4-saturated-(3S)-3-hydroxyacyl-CoA = a (3E)-enoyl-CoA + H2O. It catalyses the reaction (3S)-3-hydroxybutanoyl-CoA = (3R)-3-hydroxybutanoyl-CoA. The catalysed reaction is a (3Z)-enoyl-CoA = a 4-saturated (2E)-enoyl-CoA. The enzyme catalyses a (3E)-enoyl-CoA = a 4-saturated (2E)-enoyl-CoA. Its pathway is lipid metabolism; fatty acid beta-oxidation. Its function is as follows. Involved in the aerobic and anaerobic degradation of long-chain fatty acids via beta-oxidation cycle. Catalyzes the formation of 3-oxoacyl-CoA from enoyl-CoA via L-3-hydroxyacyl-CoA. It can also use D-3-hydroxyacyl-CoA and cis-3-enoyl-CoA as substrate. The polypeptide is Fatty acid oxidation complex subunit alpha (Pseudomonas paraeruginosa (strain DSM 24068 / PA7) (Pseudomonas aeruginosa (strain PA7))).